We begin with the raw amino-acid sequence, 458 residues long: MQVLGMEEKPARRSVVLVPFPAQGHISPMMQLAKTLHLKGFSITVVQTKFNYFSPSDDFTHDFQFVTIPESLPESDFKNLGPIQFLFKLNKECKVSFKDCLGQLVLQQSNEISCVIYDEFMYFAEAAAKECKLPNIIFSTTSATAFACRSVFDKLYANNVQAPLKETKGQQEELVPEFYPLRYKDFPVSRFASLESIMEVYRNTVDKRTASSVIINTASCLESSSLSFLQQQQLQIPVYPIGPLHMVASAPTSLLEENKSCIEWLNKQKVNSVIYISMGSIALMEINEIMEVASGLAASNQHFLWVIRPGSIPGSEWIESMPEEFSKMVLDRGYIVKWAPQKEVLSHPAVGGFWSHCGWNSTLESIGQGVPMICRPFSGDQKVNARYLECVWKIGIQVEGELDRGVVERAVKRLMVDEEGEEMRKRAFSLKEQLRASVKSGGSSHNSLEEFVHFIRTL.

The Proton acceptor role is filled by H25. Residue H25 coordinates an anthocyanidin. The Charge relay role is filled by D118. The UDP-alpha-D-glucose site is built by T140, A339, Q341, H356, W359, N360, S361, and E364. Position 379 (G379) interacts with an anthocyanidin. Positions 380 and 381 each coordinate UDP-alpha-D-glucose.

This sequence belongs to the UDP-glycosyltransferase family.

The enzyme catalyses a flavonol + UDP-alpha-D-glucose = a flavonol 3-O-beta-D-glucoside + UDP + H(+). It carries out the reaction a 7-O-hydroxy-flavonol + UDP-alpha-D-glucose = a flavonol 7-O-beta-D-glucoside + UDP + H(+). Possesses quercetin 3-O-glucosyltransferase and 7-O-glucosyltransferase activities in vitro. This is Flavonol 3-O-glucosyltransferase UGT76E12 from Arabidopsis thaliana (Mouse-ear cress).